A 32-amino-acid chain; its full sequence is Sodium channel neurotoxin BmK NT2 (32 aa).

The LCN-type CS-alpha/beta domain occupies 2–32 (RDAYIAKPENCVYHCAGNEGCNNLCTCNGAT).

As to expression, expressed by the venom gland.

The protein localises to the secreted. In terms of biological role, alpha toxins bind voltage-independently at site-3 of sodium channels (Nav) and inhibit the inactivation of the activated channels, thereby blocking neuronal transmission. This toxin dose-dependently delays inactivation of voltage-gated sodium channels (Nav) (EC(50)=0.91 uM), and shifts the steady-state activation and inactivation to hyperpolarized direction. In addition, it dose-dependently alters calcium dynamics and increases phosphorylation of MAP kinases 1/3 (MAPK1/MAPK3) and cAMP-response element binding (CREB) proteins in neocortical neurons. This effect is eliminated by tetrodotoxin, a Nav blocker. The chain is Sodium channel neurotoxin BmK NT2 from Olivierus martensii (Manchurian scorpion).